The primary structure comprises 195 residues: Putative manganese efflux pump MntP (195 aa).

Transmembrane regions (helical) follow at residues 3-23 (LSAT…ASVG), 40-60 (GLIF…LGLL), 68-88 (WDHW…VLAG), 106-126 (VLIA…VGLA), 132-152 (ILHA…IGML), and 165-185 (AEII…YSHI).

It belongs to the MntP (TC 9.B.29) family.

It localises to the cell inner membrane. Its function is as follows. Probably functions as a manganese efflux pump. This Sodalis glossinidius (strain morsitans) protein is Putative manganese efflux pump MntP.